The sequence spans 230 residues: Probable fimbrial chaperone SfmC (230 aa).

Residues 1-23 (MMTKIKLLMLIIFYLIISASAHA) form the signal peptide.

This sequence belongs to the periplasmic pilus chaperone family.

The protein resides in the periplasm. Functionally, part of the sfmACDHF fimbrial operon. Could contribute to adhesion to various surfaces in specific environmental niches. Increases adhesion to eukaryotic T24 bladder epithelial cells in the absence of fim genes. The sequence is that of Probable fimbrial chaperone SfmC (sfmC) from Escherichia coli (strain K12).